A 167-amino-acid polypeptide reads, in one-letter code: Small ribosomal subunit protein uS3m (167 aa).

The N-terminal 35 residues, 1 to 35 (MAASVCSGLLGPRVLSWSRELPCAWRALHTSPVCA), are a transit peptide targeting the mitochondrion.

The protein belongs to the universal ribosomal protein uS3 family. In terms of assembly, component of the mitochondrial small ribosomal subunit (mt-SSU). Mature mammalian 55S mitochondrial ribosomes consist of a small (28S) and a large (39S) subunit. The 28S small subunit contains a 12S ribosomal RNA (12S mt-rRNA) and 30 different proteins. The 39S large subunit contains a 16S rRNA (16S mt-rRNA), a copy of mitochondrial valine transfer RNA (mt-tRNA(Val)), which plays an integral structural role, and 52 different proteins.

The protein resides in the mitochondrion. The polypeptide is Small ribosomal subunit protein uS3m (MRPS24) (Homo sapiens (Human)).